The following is a 145-amino-acid chain: uncharacterized protein (145 aa).

The first 22 residues, 1-22 (MLTRLVLSAHLSSTTSPPWTHA), serve as a signal peptide directing secretion. Residue asparagine 98 is glycosylated (N-linked (GlcNAc...) asparagine). The interval 103-145 (SSGQQRQAARQEEENSICKAHDSREGRLGYPLSAHQPGSGGPN) is disordered.

It is found in the secreted. This is an uncharacterized protein from Homo sapiens (Human).